The primary structure comprises 560 residues: Oxygen-dependent choline dehydrogenase (560 aa).

8 to 37 (DYIIIGAGSAGNVLATRLTEDADVSVLLLE) contributes to the FAD binding site. Catalysis depends on H475, which acts as the Proton acceptor.

This sequence belongs to the GMC oxidoreductase family. It depends on FAD as a cofactor.

It catalyses the reaction choline + A = betaine aldehyde + AH2. The enzyme catalyses betaine aldehyde + NAD(+) + H2O = glycine betaine + NADH + 2 H(+). The protein operates within amine and polyamine biosynthesis; betaine biosynthesis via choline pathway; betaine aldehyde from choline (cytochrome c reductase route): step 1/1. Its function is as follows. Involved in the biosynthesis of the osmoprotectant glycine betaine. Catalyzes the oxidation of choline to betaine aldehyde and betaine aldehyde to glycine betaine at the same rate. The protein is Oxygen-dependent choline dehydrogenase of Stenotrophomonas maltophilia (strain K279a).